Reading from the N-terminus, the 265-residue chain is Energy-coupling factor transporter ATP-binding protein EcfA1 (265 aa).

The ABC transporter domain maps to 2–236; it reads IKIKNLVFRY…KEIVELAKID (235 aa). 36 to 43 contributes to the ATP binding site; it reads GHNGSGKS.

The protein belongs to the ABC transporter superfamily. Energy-coupling factor EcfA family. In terms of assembly, forms a stable energy-coupling factor (ECF) transporter complex composed of 2 membrane-embedded substrate-binding proteins (S component), 2 ATP-binding proteins (A component) and 2 transmembrane proteins (T component).

The protein resides in the cell membrane. ATP-binding (A) component of a common energy-coupling factor (ECF) ABC-transporter complex. Unlike classic ABC transporters this ECF transporter provides the energy necessary to transport a number of different substrates. In Mycoplasmopsis pulmonis (strain UAB CTIP) (Mycoplasma pulmonis), this protein is Energy-coupling factor transporter ATP-binding protein EcfA1.